Here is a 309-residue protein sequence, read N- to C-terminus: NAD kinase (309 aa).

Asp89 serves as the catalytic Proton acceptor. NAD(+) contacts are provided by residues 89-90 (DG), 163-164 (NE), His174, Arg191, Asp193, and 204-209 (TAYALS).

It belongs to the NAD kinase family. Requires a divalent metal cation as cofactor.

Its subcellular location is the cytoplasm. It catalyses the reaction NAD(+) + ATP = ADP + NADP(+) + H(+). In terms of biological role, involved in the regulation of the intracellular balance of NAD and NADP, and is a key enzyme in the biosynthesis of NADP. Catalyzes specifically the phosphorylation on 2'-hydroxyl of the adenosine moiety of NAD to yield NADP. The protein is NAD kinase of Shewanella baltica (strain OS155 / ATCC BAA-1091).